The primary structure comprises 652 residues: MNWVGGSRSRVLIKQERRKQKEYFERNKLKSKLKLLGVVSPVKKPSVSLDLLNLYVVNQISSMKENSETMKRPTHVNMTRDLKVPLRKHDLELPMSPHCVPSKLCIDDMEDSVPYQRIYSKEETGPVQSSQDMKSYRMFNETGNCSYIPPSFPEELRSNRHIRSQHSTPRIGPSPQQFVYENPHSGQFSNGKFPESLFSKLNKHQHVFSSSQTTAEFEAPYKRTNSSETGDFLTKRSMIMGEDCRSLYERRQPDFAMEKPLVQQIYANNGEEFSNFLEDVIHPTQRHLPDNHNSFVSHSMIDLLSKDQPGRRATFTKCGYDSLSDTHVVSSDESHSSSGLINGEFTVPQATSPNFPFNTSYTETCQPNRPCQEYNSNEINEFRRSFEKDCYSIGCGRKGKIESDKQLKELQRNARKHPVYTMADIPLEELHCKQSCDFDQNEIPMERRGMCPLKGQPMSTEKIYLESSQSSQSASYSPRPTESTFSSSTDLISEDEDQIQQQTEDSNKKATETTGNCCLEKMENHFDDITVKDDATAHKQNHKCLQSSEKNNADAFPESQCNSEHTVQNKSTDNCVLQAGRCDVGVQTEEAPLVGNTADVAVQCTIITRCSCMSSPVLIREKESSHPEAGSCTEDRTADTTGGQETPTSNSL.

Residues 1 to 228 constitute a DNA-binding region (binds DNA containing a D-loop); that stretch reads MNWVGGSRSR…APYKRTNSSE (228 aa). 2 disordered regions span residues 464–512 and 621–652; these read YLES…KATE and EKES…SNSL. Low complexity predominate over residues 467-477; it reads SSQSSQSASYS. Polar residues-rich tracts occupy residues 478 to 491 and 639 to 652; these read PRPT…STDL and DTTG…SNSL.

Interacts with MSH5. Interacts with TEX11. As to expression, expressed mainly in testis (at protein level). Expressed in spermatogonia and enriched in spermatocytes; absent in testicular somatic cells (at protein level). No expression or low levels in other tissues.

It is found in the chromosome. In terms of biological role, involved in recombination, probably acting by stabilizing recombination intermediates during meiotic crossover formation. Required for normal germline development and fertility. Required for meiotic progression, complete chromosomal synapsis and crossover formation. Binds double-stranded DNA. However, also binds branched DNA molecules, such as those containing a D-loop or Holliday junction structure. Probably not required for formation of DNA double-strand breaks (DSBs). Also binds RNA in an RNA structure-independent manner, with a preference for binding 3'-UTR regions of mRNAs; may stabilize bound RNAs. This is Regulator of DNA class I crossover intermediates 1 from Mus musculus (Mouse).